A 434-amino-acid chain; its full sequence is Nicotinate phosphoribosyltransferase (434 aa).

Histidine 242 bears the Phosphohistidine; by autocatalysis mark.

It belongs to the NAPRTase family. Post-translationally, transiently phosphorylated on a His residue during the reaction cycle. Phosphorylation strongly increases the affinity for substrates and increases the rate of nicotinate D-ribonucleotide production. Dephosphorylation regenerates the low-affinity form of the enzyme, leading to product release.

The catalysed reaction is nicotinate + 5-phospho-alpha-D-ribose 1-diphosphate + ATP + H2O = nicotinate beta-D-ribonucleotide + ADP + phosphate + diphosphate. The protein operates within cofactor biosynthesis; NAD(+) biosynthesis; nicotinate D-ribonucleotide from nicotinate: step 1/1. Its function is as follows. Catalyzes the synthesis of beta-nicotinate D-ribonucleotide from nicotinate and 5-phospho-D-ribose 1-phosphate at the expense of ATP. The polypeptide is Nicotinate phosphoribosyltransferase (Rhizobium etli (strain CIAT 652)).